Reading from the N-terminus, the 287-residue chain is Cell division protein ZipA (287 aa).

A topological domain (periplasmic) is located at residue Met-1. The helical transmembrane segment at 2–22 (EIGLREWLIVIGIIVIAGILF) threads the bilayer. Residues 23–287 (DGWRRMRGGK…FERRALTQKR (265 aa)) lie on the Cytoplasmic side of the membrane. A disordered region spans residues 70-143 (LDEHDLPSMS…APRQSVNDQP (74 aa)).

The protein belongs to the ZipA family. As to quaternary structure, interacts with FtsZ via their C-terminal domains.

It localises to the cell inner membrane. Its function is as follows. Essential cell division protein that stabilizes the FtsZ protofilaments by cross-linking them and that serves as a cytoplasmic membrane anchor for the Z ring. Also required for the recruitment to the septal ring of downstream cell division proteins. The chain is Cell division protein ZipA from Pseudomonas fluorescens (strain SBW25).